The primary structure comprises 134 residues: MLSPKRTRFRKQHRGRMKGISSRGNRISFGKYALQALEPAWITSRQIEAGRRAMTRNARRGGKIWVRIFPDKPVTLRPAETRMGSGKGSPEYWVAVVKPGRILYEMGGVTENIARRAISLAASKMPIRTQFIIS.

A compositionally biased stretch (basic residues) spans 1–17 (MLSPKRTRFRKQHRGRM). The tract at residues 1 to 21 (MLSPKRTRFRKQHRGRMKGIS) is disordered.

Belongs to the universal ribosomal protein uL16 family. In terms of assembly, part of the 50S ribosomal subunit.

Its subcellular location is the plastid. It is found in the chloroplast. The sequence is that of Large ribosomal subunit protein uL16c from Solanum bulbocastanum (Wild potato).